A 324-amino-acid polypeptide reads, in one-letter code: NADH-ubiquinone oxidoreductase chain 1 (324 aa).

Transmembrane regions (helical) follow at residues 9–29 (IINP…LTLL), 43–63 (PNIV…KLFI), 75–95 (FLFL…WAPM), 106–126 (LGVL…LGSG), 146–166 (ISYE…TGGF), 177–197 (SIWL…STLA), 237–257 (ILLM…IPAF), 259–279 (ELTA…FLWV), and 299–319 (FLPL…AMAG).

The protein belongs to the complex I subunit 1 family.

It is found in the mitochondrion inner membrane. The enzyme catalyses a ubiquinone + NADH + 5 H(+)(in) = a ubiquinol + NAD(+) + 4 H(+)(out). Its function is as follows. Core subunit of the mitochondrial membrane respiratory chain NADH dehydrogenase (Complex I) that is believed to belong to the minimal assembly required for catalysis. Complex I functions in the transfer of electrons from NADH to the respiratory chain. The immediate electron acceptor for the enzyme is believed to be ubiquinone. In Salmo salar (Atlantic salmon), this protein is NADH-ubiquinone oxidoreductase chain 1 (MT-ND1).